The chain runs to 78 residues: Dermaseptin-B1 (78 aa).

Positions 1–22 (MDILKKSLFLVLFLGLVSLSIC) are cleaved as a signal peptide. Positions 23–42 (EEEKRENEDEEKQDDEQSEM) are excised as a propeptide. Q75 carries the post-translational modification Glutamine amide. A propeptide spanning residues 76–78 (GEQ) is cleaved from the precursor.

It belongs to the frog skin active peptide (FSAP) family. Dermaseptin subfamily. Expressed by the skin glands.

It localises to the secreted. In terms of biological role, possesses a potent antimicrobial activity against bacteria, fungi and protozoa. Probably acts by disturbing membrane functions with its amphipathic structure. This Phyllomedusa bicolor (Two-colored leaf frog) protein is Dermaseptin-B1.